Reading from the N-terminus, the 135-residue chain is Ig heavy chain V region XIG14 (135 aa).

An N-terminal signal peptide occupies residues 1–18 (DFIIFFIFMFFSPSCILS). Positions 20 to 128 (TLQESGPGTV…GYNFDYWGQG (109 aa)) constitute an Ig-like domain.

This Xenopus laevis (African clawed frog) protein is Ig heavy chain V region XIG14.